Reading from the N-terminus, the 406-residue chain is Oligouridylate-binding protein 1 (406 aa).

2 RRM domains span residues 49-123 and 134-212; these read RSVY…WAYA and YNIF…WAAK. The tract at residues 231–250 is disordered; the sequence is TSGTSDDGQEKVVNEDAPEN. In terms of domain architecture, RRM 3 spans 255–329; sequence TTVYVGNLAP…KPVKCSWGSK (75 aa).

The protein resides in the nucleus. Functionally, heterogeneous nuclear ribonucleoprotein (hnRNP)-like protein that acts as a component of the pre-mRNA processing machinery. Functions to facilitate the nuclear maturation of plant pre-mRNAs. Binds with high affinity to RNA molecules that contain AU-rich regions. May bind to the 3'-UTR and protects the mRNA against exonucleolytic degradation. Associates with nuclear poly(A)+ RNA in nucleus in vivo. Does not stimulate transcription or the 3' end cleavage/polyadenylation reaction. The polypeptide is Oligouridylate-binding protein 1 (UBP1) (Nicotiana plumbaginifolia (Leadwort-leaved tobacco)).